The following is a 348-amino-acid chain: Sorbitol dehydrogenase (348 aa).

The Zn(2+) site is built by cysteine 40, histidine 65, and glutamate 66. NAD(+) contacts are provided by residues isoleucine 179, aspartate 199, arginine 204, 269–271 (VGI), and 293–295 (SFR). Arginine 295 is a substrate binding site.

Belongs to the zinc-containing alcohol dehydrogenase family. As to quaternary structure, homotetramer. Zn(2+) is required as a cofactor.

The catalysed reaction is xylitol + NAD(+) = D-xylulose + NADH + H(+). It catalyses the reaction L-iditol + NAD(+) = keto-L-sorbose + NADH + H(+). The enzyme catalyses keto-D-fructose + NADH + H(+) = D-sorbitol + NAD(+). In terms of biological role, polyol dehydrogenase that catalyzes the reversible NAD(+)-dependent oxidation of various sugar alcohols. Is active with xylitol, L-iditol and D-sorbitol (D-glucitol) as substrates, leading to the C2-oxidized products D-xylulose, L-sorbose and D-fructose, respectively. Is a key enzyme in the polyol pathway that interconverts glucose and fructose via sorbitol, which constitutes an important alternate route for glucose metabolism. This chain is Sorbitol dehydrogenase (SDH), found in Bombyx mori (Silk moth).